The sequence spans 363 residues: Putative RAD2-like endonuclease 095R (363 aa).

Belongs to the XPG/RAD2 endonuclease family. The cofactor is Mg(2+).

The protein resides in the host nucleus. Probable endonuclease. This Frog virus 3 (isolate Goorha) (FV-3) protein is Putative RAD2-like endonuclease 095R.